Reading from the N-terminus, the 631-residue chain is 1-deoxy-D-xylulose-5-phosphate synthase (631 aa).

Thiamine diphosphate-binding positions include His73 and 114 to 116; that span reads SHA. Asp145 lines the Mg(2+) pocket. Thiamine diphosphate is bound by residues 146-147, Asn175, Tyr286, and Glu368; that span reads GA. Residue Asn175 coordinates Mg(2+).

It belongs to the transketolase family. DXPS subfamily. In terms of assembly, homodimer. The cofactor is Mg(2+). Thiamine diphosphate is required as a cofactor.

The enzyme catalyses D-glyceraldehyde 3-phosphate + pyruvate + H(+) = 1-deoxy-D-xylulose 5-phosphate + CO2. Its pathway is metabolic intermediate biosynthesis; 1-deoxy-D-xylulose 5-phosphate biosynthesis; 1-deoxy-D-xylulose 5-phosphate from D-glyceraldehyde 3-phosphate and pyruvate: step 1/1. In terms of biological role, catalyzes the acyloin condensation reaction between C atoms 2 and 3 of pyruvate and glyceraldehyde 3-phosphate to yield 1-deoxy-D-xylulose-5-phosphate (DXP). This is 1-deoxy-D-xylulose-5-phosphate synthase from Nocardia farcinica (strain IFM 10152).